Here is a 235-residue protein sequence, read N- to C-terminus: Small ribosomal subunit protein uS3 (235 aa).

Residues 39–107 form the KH type-2 domain; that stretch reads VRQFLNKELA…PAQINIAEVK (69 aa). Low complexity predominate over residues 215–226; it reads AQQPEQQPATPK. The tract at residues 215 to 235 is disordered; it reads AQQPEQQPATPKKAPRGKGRK.

It belongs to the universal ribosomal protein uS3 family. As to quaternary structure, part of the 30S ribosomal subunit. Forms a tight complex with proteins S10 and S14.

In terms of biological role, binds the lower part of the 30S subunit head. Binds mRNA in the 70S ribosome, positioning it for translation. The sequence is that of Small ribosomal subunit protein uS3 from Histophilus somni (strain 129Pt) (Haemophilus somnus).